The chain runs to 342 residues: Glucokinase (342 aa).

7–12 provides a ligand contact to ATP; the sequence is GDIGGT.

Belongs to the bacterial glucokinase family.

The protein resides in the cytoplasm. It carries out the reaction D-glucose + ATP = D-glucose 6-phosphate + ADP + H(+). The protein is Glucokinase of Trichormus variabilis (strain ATCC 29413 / PCC 7937) (Anabaena variabilis).